The chain runs to 210 residues: Protein GET1 (210 aa).

The Lumenal portion of the chain corresponds to 1 to 4 (MPSL). Residues 5–24 (LIIVLIIHVVTYLINTIGAN) traverse the membrane as a helical segment. The Cytoplasmic segment spans residues 25-110 (TIDSLLWLLY…SFDLAVKSVR (86 aa)). Positions 39–95 (NQTSQTADEQRRLKREVMQLKREMNATSSQDEFAKWAKLRRRHDKTMEEYEAKNKAL) form a coiled coil. A helical membrane pass occupies residues 111 to 131 (FFSTTGLKLFLQFWFSKTPIF). Over 132–155 (ELPRGWIPWQVEWVLSFPRAPLGT) the chain is Lumenal. The chain crosses the membrane as a helical span at residues 156 to 172 (VSIQIWGGVCATVVSLA). The Cytoplasmic portion of the chain corresponds to 173 to 210 (GDAIGVVNVYLTSKAPKQKEPATSGENSARPMAIKKEL). The interval 189 to 210 (KQKEPATSGENSARPMAIKKEL) is disordered.

It belongs to the WRB/GET1 family. Interacts with GET3.

The protein resides in the endoplasmic reticulum membrane. Its function is as follows. Required for the post-translational delivery of tail-anchored (TA) proteins to the endoplasmic reticulum. Acts as a membrane receptor for soluble GET3, which recognizes and selectively binds the transmembrane domain of TA proteins in the cytosol. This chain is Protein GET1, found in Coccidioides posadasii (strain C735) (Valley fever fungus).